Here is a 545-residue protein sequence, read N- to C-terminus: MTKNYIFITGGVVSSLGKGIAAASLGAILKARNLNITIIKLDPYINVDPGTISPIQHGEVFVTEDGAETDLDLGHYERFIHTKMTFLNNFTTGGVYSQVLKKERRGDYLGATIQVIPHITNAIKERIILCSENSNIILVEIGGTVGDIESLPFLEAIRQMAVDIGRKNVIYIHLTLVPYIATAGEIKTKPTQHSVKQLLSIGIQPDILICRSEKTVPLHERKKIALFCNVPVDAVISLKDVNSIYKIPKLLKNQKLDDYICNYFKLNVPEADLQEWEEVIYAEKNFNNTIVIGIIGKYIKLPDAYKSVMEALKHAGFKNKIKVDIQLINSQEVENKNFQILKNLNGILIPGGFGDRGIVGKLLSIQYARENHIPYFGICLGMQIAIIEFAQNVVGIKEANSTEFDPQCKYPIIDLIKNRPNNSSKNYNKIENRINLGGTMRLGSQPCKLSANSLSRKLYNQEIIIERHRHRYEVNNLLFKKIEAAGLQVTGRSQKNNVVEIIELSNHPWFLACQFHPEFTSTPRDGHPLFIDFIKSAGKHKKNFI.

An amidoligase domain region spans residues 1 to 266 (MTKNYIFITG…DDYICNYFKL (266 aa)). Ser-14 provides a ligand contact to CTP. Ser-14 provides a ligand contact to UTP. ATP is bound by residues 15 to 20 (SLGKGI) and Asp-72. 2 residues coordinate Mg(2+): Asp-72 and Glu-140. Residues 147 to 149 (DIE), 187 to 192 (KTKPTQ), and Lys-223 contribute to the CTP site. UTP-binding positions include 187–192 (KTKPTQ) and Lys-223. Residue 239–241 (KDV) coordinates ATP. In terms of domain architecture, Glutamine amidotransferase type-1 spans 291-543 (VIGIIGKYIK…IKSAGKHKKN (253 aa)). Position 352 (Gly-352) interacts with L-glutamine. Cys-379 (nucleophile; for glutamine hydrolysis) is an active-site residue. L-glutamine-binding positions include 380-383 (LGMQ), Glu-403, and Arg-471. Active-site residues include His-516 and Glu-518.

The protein belongs to the CTP synthase family. Homotetramer.

It carries out the reaction UTP + L-glutamine + ATP + H2O = CTP + L-glutamate + ADP + phosphate + 2 H(+). The enzyme catalyses L-glutamine + H2O = L-glutamate + NH4(+). It catalyses the reaction UTP + NH4(+) + ATP = CTP + ADP + phosphate + 2 H(+). Its pathway is pyrimidine metabolism; CTP biosynthesis via de novo pathway; CTP from UDP: step 2/2. Its activity is regulated as follows. Allosterically activated by GTP, when glutamine is the substrate; GTP has no effect on the reaction when ammonia is the substrate. The allosteric effector GTP functions by stabilizing the protein conformation that binds the tetrahedral intermediate(s) formed during glutamine hydrolysis. Inhibited by the product CTP, via allosteric rather than competitive inhibition. Catalyzes the ATP-dependent amination of UTP to CTP with either L-glutamine or ammonia as the source of nitrogen. Regulates intracellular CTP levels through interactions with the four ribonucleotide triphosphates. This Buchnera aphidicola subsp. Acyrthosiphon pisum (strain 5A) protein is CTP synthase.